Consider the following 267-residue polypeptide: Matrilysin (267 aa).

An N-terminal signal peptide occupies residues 1-20; it reads MAAMRLTLFRIVCLLPGCLA. The propeptide at 21–97 is activation peptide; the sequence is LPLSQEAGEV…PRCGVPDVAE (77 aa). The Cysteine switch signature appears at 88–95; that stretch reads PRCGVPDV. Cys-90 serves as a coordination point for Zn(2+). Asp-156 is a Ca(2+) binding site. The Zn(2+) site is built by His-166 and Asp-168. The Ca(2+) site is built by Asp-173, Gly-174, Gly-176, and Thr-178. Residue His-181 coordinates Zn(2+). The Ca(2+) site is built by Gly-188, Gly-190, and Asp-192. Position 194 (His-194) interacts with Zn(2+). Ca(2+) contacts are provided by Asp-196 and Glu-199. Position 217 (His-217) interacts with Zn(2+). Glu-218 is an active-site residue. Zn(2+) is bound by residues His-221 and His-227.

This sequence belongs to the peptidase M10A family. It depends on Ca(2+) as a cofactor. Requires Zn(2+) as cofactor.

Its subcellular location is the secreted. It localises to the extracellular space. The protein localises to the extracellular matrix. It carries out the reaction Cleavage of 14-Ala-|-Leu-15 and 16-Tyr-|-Leu-17 in B chain of insulin. No action on collagen types I, II, IV, V. Cleaves gelatin chain alpha2(I) &gt; alpha1(I).. Functionally, degrades casein, gelatins of types I, III, IV, and V, and fibronectin. Activates procollagenase. This is Matrilysin (Mmp7) from Rattus norvegicus (Rat).